Consider the following 471-residue polypeptide: Glutamate--tRNA ligase 1 (471 aa).

Residues 10-20 (PSPTGFLHIGG) carry the 'HIGH' region motif. Residues 113 to 140 (ARKEGRPPRYDGRWRDRDPSEAPKDRDP) are disordered. The 'KMSKS' region motif lies at 239–243 (KLSKR). Lysine 242 serves as a coordination point for ATP.

The protein belongs to the class-I aminoacyl-tRNA synthetase family. Glutamate--tRNA ligase type 1 subfamily. In terms of assembly, monomer.

It localises to the cytoplasm. The enzyme catalyses tRNA(Glu) + L-glutamate + ATP = L-glutamyl-tRNA(Glu) + AMP + diphosphate. Its function is as follows. Catalyzes the attachment of glutamate to tRNA(Glu) in a two-step reaction: glutamate is first activated by ATP to form Glu-AMP and then transferred to the acceptor end of tRNA(Glu). In Xanthobacter autotrophicus (strain ATCC BAA-1158 / Py2), this protein is Glutamate--tRNA ligase 1.